Reading from the N-terminus, the 102-residue chain is Urease subunit beta (102 aa).

The protein belongs to the urease beta subunit family. As to quaternary structure, heterotrimer of UreA (gamma), UreB (beta) and UreC (alpha) subunits. Three heterotrimers associate to form the active enzyme.

It is found in the cytoplasm. The enzyme catalyses urea + 2 H2O + H(+) = hydrogencarbonate + 2 NH4(+). The protein operates within nitrogen metabolism; urea degradation; CO(2) and NH(3) from urea (urease route): step 1/1. The protein is Urease subunit beta of Bordetella parapertussis (strain 12822 / ATCC BAA-587 / NCTC 13253).